A 448-amino-acid chain; its full sequence is Tubulin alpha-4A chain (448 aa).

An MREC motif motif is present at residues 1-4; sequence MREC. Glutamine 11 contacts GTP. Lysine 40 carries the N6-acetyllysine modification. Serine 48 carries the phosphoserine modification. Glutamate 71 provides a ligand contact to GTP. Glutamate 71 lines the Mg(2+) pocket. A 3'-nitrotyrosine modification is found at tyrosine 83. Positions 140, 144, 145, 179, 206, and 228 each coordinate GTP. Glutamate 254 is an active-site residue. Tyrosine 432 is subject to Phosphotyrosine. Serine 439 is modified (phosphoserine).

This sequence belongs to the tubulin family. In terms of assembly, dimer of alpha and beta chains. A typical microtubule is a hollow water-filled tube with an outer diameter of 25 nm and an inner diameter of 15 nM. Alpha-beta heterodimers associate head-to-tail to form protofilaments running lengthwise along the microtubule wall with the beta-tubulin subunit facing the microtubule plus end conferring a structural polarity. Microtubules usually have 13 protofilaments but different protofilament numbers can be found in some organisms and specialized cells. Interacts with CFAP157. Mg(2+) is required as a cofactor. In terms of processing, some glutamate residues at the C-terminus are polyglycylated, resulting in polyglycine chains on the gamma-carboxyl group. Glycylation is mainly limited to tubulin incorporated into axonemes (cilia and flagella) whereas glutamylation is prevalent in neuronal cells, centrioles, axonemes, and the mitotic spindle. Both modifications can coexist on the same protein on adjacent residues, and lowering polyglycylation levels increases polyglutamylation, and reciprocally. Cilia and flagella glycylation is required for their stability and maintenance. Flagella glycylation controls sperm motility. Post-translationally, some glutamate residues at the C-terminus are polyglutamylated, resulting in polyglutamate chains on the gamma-carboxyl group. Polyglutamylation plays a key role in microtubule severing by spastin (SPAST). SPAST preferentially recognizes and acts on microtubules decorated with short polyglutamate tails: severing activity by SPAST increases as the number of glutamates per tubulin rises from one to eight, but decreases beyond this glutamylation threshold. Glutamylation is also involved in cilia motility. Acetylation of alpha chains at Lys-40 is located inside the microtubule lumen. This modification has been correlated with increased microtubule stability, intracellular transport and ciliary assembly. In terms of processing, methylation of alpha chains at Lys-40 is found in mitotic microtubules and is required for normal mitosis and cytokinesis contributing to genomic stability. Post-translationally, although this tubulin does not encode a C-terminal tyrosine, a C-terminal tyrosine can be added post-translationally by the tubulin tyrosine ligase (TTL). It can then undergo a detyrosination cycle by the tubulin tyrosine carboxypeptidase (MATCAP1/KIAA0895L).

The protein localises to the cytoplasm. Its subcellular location is the cytoskeleton. The catalysed reaction is GTP + H2O = GDP + phosphate + H(+). Tubulin is the major constituent of microtubules, a cylinder consisting of laterally associated linear protofilaments composed of alpha- and beta-tubulin heterodimers. Microtubules grow by the addition of GTP-tubulin dimers to the microtubule end, where a stabilizing cap forms. Below the cap, tubulin dimers are in GDP-bound state, owing to GTPase activity of alpha-tubulin. The chain is Tubulin alpha-4A chain (TUBA4A) from Macaca fascicularis (Crab-eating macaque).